A 278-amino-acid chain; its full sequence is Pantothenate synthetase (278 aa).

27-34 (MGYLHEGH) is a binding site for ATP. Residue His-34 is the Proton donor of the active site. Residue Gln-58 participates in (R)-pantoate binding. A beta-alanine-binding site is contributed by Gln-58. 144-147 (GQKD) serves as a coordination point for ATP. Gln-150 is a (R)-pantoate binding site. Residues Val-173 and 181–184 (MSSR) each bind ATP.

This sequence belongs to the pantothenate synthetase family. In terms of assembly, homodimer.

The protein resides in the cytoplasm. It catalyses the reaction (R)-pantoate + beta-alanine + ATP = (R)-pantothenate + AMP + diphosphate + H(+). It participates in cofactor biosynthesis; (R)-pantothenate biosynthesis; (R)-pantothenate from (R)-pantoate and beta-alanine: step 1/1. Its function is as follows. Catalyzes the condensation of pantoate with beta-alanine in an ATP-dependent reaction via a pantoyl-adenylate intermediate. This is Pantothenate synthetase from Roseiflexus sp. (strain RS-1).